Reading from the N-terminus, the 178-residue chain is UPF0228 protein MM_0401 (178 aa).

The protein belongs to the UPF0228 family.

The polypeptide is UPF0228 protein MM_0401 (Methanosarcina mazei (strain ATCC BAA-159 / DSM 3647 / Goe1 / Go1 / JCM 11833 / OCM 88) (Methanosarcina frisia)).